Reading from the N-terminus, the 419-residue chain is Serine hydroxymethyltransferase (419 aa).

(6S)-5,6,7,8-tetrahydrofolate is bound by residues Leu119 and 123 to 125 (GHL). At Lys228 the chain carries N6-(pyridoxal phosphate)lysine.

Belongs to the SHMT family. In terms of assembly, homodimer. Pyridoxal 5'-phosphate is required as a cofactor.

The protein resides in the cytoplasm. The catalysed reaction is (6R)-5,10-methylene-5,6,7,8-tetrahydrofolate + glycine + H2O = (6S)-5,6,7,8-tetrahydrofolate + L-serine. It participates in one-carbon metabolism; tetrahydrofolate interconversion. It functions in the pathway amino-acid biosynthesis; glycine biosynthesis; glycine from L-serine: step 1/1. Functionally, catalyzes the reversible interconversion of serine and glycine with tetrahydrofolate (THF) serving as the one-carbon carrier. This reaction serves as the major source of one-carbon groups required for the biosynthesis of purines, thymidylate, methionine, and other important biomolecules. Also exhibits THF-independent aldolase activity toward beta-hydroxyamino acids, producing glycine and aldehydes, via a retro-aldol mechanism. The polypeptide is Serine hydroxymethyltransferase (Desulfosudis oleivorans (strain DSM 6200 / JCM 39069 / Hxd3) (Desulfococcus oleovorans)).